A 319-amino-acid polypeptide reads, in one-letter code: ATP-dependent 6-phosphofructokinase (319 aa).

Glycine 11 contacts ATP. 21-25 (RAVVR) serves as a coordination point for ADP. Residues 72–73 (RC) and 102–105 (GDGS) each bind ATP. Residue aspartate 103 participates in Mg(2+) binding. 125 to 127 (TID) contributes to the substrate binding site. The active-site Proton acceptor is the aspartate 127. An ADP-binding site is contributed by arginine 154. Residues arginine 162 and 169-171 (MGR) contribute to the substrate site. Residues 185-187 (GAE), lysine 211, and 213-215 (KMH) contribute to the ADP site. Substrate is bound by residues glutamate 222, arginine 243, and 249–252 (HIQR).

Belongs to the phosphofructokinase type A (PFKA) family. ATP-dependent PFK group I subfamily. Prokaryotic clade 'B1' sub-subfamily. Homotetramer. The cofactor is Mg(2+).

Its subcellular location is the cytoplasm. It carries out the reaction beta-D-fructose 6-phosphate + ATP = beta-D-fructose 1,6-bisphosphate + ADP + H(+). Its pathway is carbohydrate degradation; glycolysis; D-glyceraldehyde 3-phosphate and glycerone phosphate from D-glucose: step 3/4. With respect to regulation, allosterically activated by ADP and other diphosphonucleosides, and allosterically inhibited by phosphoenolpyruvate. Its function is as follows. Catalyzes the phosphorylation of D-fructose 6-phosphate to fructose 1,6-bisphosphate by ATP, the first committing step of glycolysis. The chain is ATP-dependent 6-phosphofructokinase from Clostridium botulinum (strain ATCC 19397 / Type A).